A 359-amino-acid polypeptide reads, in one-letter code: Ferredoxin--NADP reductase (359 aa).

Positions 48, 56, 61, 101, 139, 304, and 345 each coordinate FAD. The interval 340-359 is disordered; sequence VHTHTSNDTNLQSRLHAAAE. Residues 341 to 352 are compositionally biased toward polar residues; it reads HTHTSNDTNLQS.

It belongs to the ferredoxin--NADP reductase type 2 family. As to quaternary structure, homodimer. The cofactor is FAD.

The enzyme catalyses 2 reduced [2Fe-2S]-[ferredoxin] + NADP(+) + H(+) = 2 oxidized [2Fe-2S]-[ferredoxin] + NADPH. This chain is Ferredoxin--NADP reductase, found in Ralstonia nicotianae (strain ATCC BAA-1114 / GMI1000) (Ralstonia solanacearum).